A 1162-amino-acid chain; its full sequence is Lysine-specific demethylase 2A (1162 aa).

S28 bears the Phosphoserine mark. Residues 148–316 (FSHTRLENMV…MQLKIYNIED (169 aa)) form the JmjC domain. Residue T209 participates in substrate binding. Residues H212 and D214 each coordinate Fe cation. K229 is a substrate binding site. H284 provides a ligand contact to Fe cation. The interval 367–389 (GLESGNGDEEAVDREPRRLSSRR) is disordered. Phosphoserine occurs at positions 390 and 394. K505 participates in a covalent cross-link: Glycyl lysine isopeptide (Lys-Gly) (interchain with G-Cter in SUMO2). The interval 532-557 (VPTIPITKPHTMKPAPRLTPVRPAAA) is disordered. T550 is modified (phosphothreonine). Phosphoserine is present on S558. A CXXC-type zinc finger spans residues 564–610 (ARRRRVRCRKCKACVQGECGVCHYCRDMKKFGGPGRMKQSCVLRQCL). Residues C571, C574, C577, C582, C585, C588, C604, C609, C620, and C623 each coordinate Zn(2+). The PHD-type zinc finger occupies 617–678 (SVTCSLCGEV…CWECPKCYQE (62 aa)). Phosphothreonine is present on T632. Residues C642, C645, H650, C653, C672, and C675 each contribute to the Zn(2+) site. S692 bears the Phosphoserine mark. The tract at residues 704-789 (PLRSCDEPLT…PSGKKELSEV (86 aa)) is disordered. The residue at position 713 (T713) is a Phosphothreonine. Phosphoserine occurs at positions 718 and 731. Basic and acidic residues-rich tracts occupy residues 746-757 (SDHHSASRDERF) and 771-789 (TMVREKENNPSGKKELSEV). Residues S825, S832, S869, and S883 each carry the phosphoserine modification. Positions 839-887 (HCPARTPQRGDEEGLGGEEEEEEEEEEEDDSAEEGGAARLNGRGSWAQD) are disordered. Residues 851–871 (EGLGGEEEEEEEEEEEDDSAE) show a composition bias toward acidic residues. The F-box domain maps to 889–936 (DESWMQREVWMSVFRYLSRRELCECMRVCKTWYKWCCDKRLWTKIDLS). LRR repeat units follow at residues 961-982 (WTNISKKQLTWLVNRLPGLKDL) and 984-1010 (LAGCSWSAVSALSTSSCPLLRTLDLRW). R1020 is subject to ADP-ribosylarginine. LRR repeat units follow at residues 1048-1073 (GLDITDATLRLIIRHMPLLSRLDLSH), 1074-1103 (CSHLTDQSSNLLTAVGSSTRYSLTELNMAG), 1104-1128 (CNKLTDQTLIYLRRIANVTLIDLRG), and 1129-1156 (CKQITRKACEHFISDLSINSLYCLSDEK).

The protein belongs to the JHDM1 histone demethylase family. In terms of assembly, interacts with CBX5/HP1A; the interaction promotes CBX5 localization to chromatin. The SKP1-KDM2A complex interacts with UBB. Part of a SCF (SKP1-cullin-F-box) protein ligase complex. Requires Fe(2+) as cofactor. Mono-ADP-ribosylated at Arg-1020 in response to DNA damage, leading to displacement from chromatin, resulting in increased dimethylation of histone H3 at 'Lys-36'. As to expression, widely expressed, with highest levels in brain, testis and ovary, followed by lung.

Its subcellular location is the nucleus. It localises to the nucleoplasm. It is found in the chromosome. It carries out the reaction N(6),N(6)-dimethyl-L-lysyl(36)-[histone H3] + 2 2-oxoglutarate + 2 O2 = L-lysyl(36)-[histone H3] + 2 formaldehyde + 2 succinate + 2 CO2. Histone demethylase that specifically demethylates 'Lys-36' of histone H3, thereby playing a central role in histone code. Preferentially demethylates dimethylated H3 'Lys-36' residue while it has weak or no activity for mono- and tri-methylated H3 'Lys-36'. May also recognize and bind to some phosphorylated proteins and promote their ubiquitination and degradation. Required to maintain the heterochromatic state. Associates with centromeres and represses transcription of small non-coding RNAs that are encoded by the clusters of satellite repeats at the centromere. Required to sustain centromeric integrity and genomic stability, particularly during mitosis. Regulates circadian gene expression by repressing the transcriptional activator activity of CLOCK-BMAL1 heterodimer and RORA in a catalytically-independent manner. The sequence is that of Lysine-specific demethylase 2A (KDM2A) from Homo sapiens (Human).